Consider the following 396-residue polypeptide: Elongation factor Tu 2 (396 aa).

In terms of domain architecture, tr-type G spans 10-206; that stretch reads KPHVNVGTIG…AIDSYIPEPE (197 aa). The interval 19–26 is G1; sequence GHIDHGKT. 19-26 is a binding site for GTP; that stretch reads GHIDHGKT. Thr26 contacts Mg(2+). Positions 60 to 64 are G2; that stretch reads GITIA. The segment at 81–84 is G3; sequence DCPG. GTP is bound by residues 81-85 and 136-139; these read DCPGH and NKCD. The interval 136–139 is G4; that stretch reads NKCD. The tract at residues 174–176 is G5; sequence SAL.

Belongs to the TRAFAC class translation factor GTPase superfamily. Classic translation factor GTPase family. EF-Tu/EF-1A subfamily. Monomer.

The protein resides in the cytoplasm. The catalysed reaction is GTP + H2O = GDP + phosphate + H(+). GTP hydrolase that promotes the GTP-dependent binding of aminoacyl-tRNA to the A-site of ribosomes during protein biosynthesis. This Desulfotalea psychrophila (strain LSv54 / DSM 12343) protein is Elongation factor Tu 2.